The primary structure comprises 75 residues: Conotoxin Vt15.1 (75 aa).

The first 19 residues, 1-19 (MMPVILPLLLSLAIRGGDG), serve as a signal peptide directing secretion. The propeptide occupies 20 to 43 (QAIQGDRDLIAKLFKRYQEHGLSV). W73 carries the post-translational modification Tryptophan amide.

This sequence belongs to the conotoxin V superfamily. In terms of processing, contains 4 disulfide bonds. As to expression, expressed by the venom duct.

The protein localises to the secreted. The sequence is that of Conotoxin Vt15.1 from Conus planorbis (Planorbis cone).